Here is a 101-residue protein sequence, read N- to C-terminus: Urease subunit beta (101 aa).

The protein belongs to the urease beta subunit family. In terms of assembly, heterotrimer of UreA (gamma), UreB (beta) and UreC (alpha) subunits. Three heterotrimers associate to form the active enzyme.

It is found in the cytoplasm. It catalyses the reaction urea + 2 H2O + H(+) = hydrogencarbonate + 2 NH4(+). Its pathway is nitrogen metabolism; urea degradation; CO(2) and NH(3) from urea (urease route): step 1/1. The sequence is that of Urease subunit beta from Burkholderia multivorans (strain ATCC 17616 / 249).